Consider the following 250-residue polypeptide: Flavin-dependent thymidylate synthase (250 aa).

The ThyX domain occupies 7-233 (LRVQLIAKTE…PQVFSDFEIT (227 aa)). FAD is bound by residues Ser-71, 95 to 97 (RHR), and Gln-103. DUMP-binding positions include 92 to 95 (ELIR), 103 to 107 (QLSQR), and Arg-172. Residues 95–105 (RHRHFSYSQLS) carry the ThyX motif motif. FAD-binding positions include 188-190 (NYR) and His-194. Arg-199 is a binding site for dUMP. Arg-199 functions as the Involved in ionization of N3 of dUMP, leading to its activation in the catalytic mechanism.

This sequence belongs to the thymidylate synthase ThyX family. Homotetramer. FAD serves as cofactor.

The enzyme catalyses dUMP + (6R)-5,10-methylene-5,6,7,8-tetrahydrofolate + NADPH + H(+) = dTMP + (6S)-5,6,7,8-tetrahydrofolate + NADP(+). It participates in pyrimidine metabolism; dTTP biosynthesis. In terms of biological role, catalyzes the reductive methylation of 2'-deoxyuridine-5'-monophosphate (dUMP) to 2'-deoxythymidine-5'-monophosphate (dTMP) while utilizing 5,10-methylenetetrahydrofolate (mTHF) as the methyl donor, and NADPH and FADH(2) as the reductant. The polypeptide is Flavin-dependent thymidylate synthase (Mycolicibacterium gilvum (strain PYR-GCK) (Mycobacterium gilvum (strain PYR-GCK))).